Consider the following 373-residue polypeptide: Dual-specificity RNA methyltransferase RlmN (373 aa).

The Proton acceptor role is filled by Glu-94. Positions 100 to 339 constitute a Radical SAM core domain; that stretch reads EDDRATLCVS…VIVRKTRGDD (240 aa). Cysteines 107 and 344 form a disulfide. Residues Cys-114, Cys-118, and Cys-121 each coordinate [4Fe-4S] cluster. S-adenosyl-L-methionine-binding positions include 168–169, Ser-200, 222–224, and Asn-301; these read GE and SIH. Cys-344 acts as the S-methylcysteine intermediate in catalysis.

This sequence belongs to the radical SAM superfamily. RlmN family. [4Fe-4S] cluster serves as cofactor.

Its subcellular location is the cytoplasm. The enzyme catalyses adenosine(2503) in 23S rRNA + 2 reduced [2Fe-2S]-[ferredoxin] + 2 S-adenosyl-L-methionine = 2-methyladenosine(2503) in 23S rRNA + 5'-deoxyadenosine + L-methionine + 2 oxidized [2Fe-2S]-[ferredoxin] + S-adenosyl-L-homocysteine. It carries out the reaction adenosine(37) in tRNA + 2 reduced [2Fe-2S]-[ferredoxin] + 2 S-adenosyl-L-methionine = 2-methyladenosine(37) in tRNA + 5'-deoxyadenosine + L-methionine + 2 oxidized [2Fe-2S]-[ferredoxin] + S-adenosyl-L-homocysteine. In terms of biological role, specifically methylates position 2 of adenine 2503 in 23S rRNA and position 2 of adenine 37 in tRNAs. m2A2503 modification seems to play a crucial role in the proofreading step occurring at the peptidyl transferase center and thus would serve to optimize ribosomal fidelity. This Shewanella sp. (strain ANA-3) protein is Dual-specificity RNA methyltransferase RlmN.